We begin with the raw amino-acid sequence, 518 residues long: UPF0288 protein Mbar_A0706 (518 aa).

This sequence belongs to the UPF0288 family.

The chain is UPF0288 protein Mbar_A0706 from Methanosarcina barkeri (strain Fusaro / DSM 804).